Reading from the N-terminus, the 77-residue chain is Putative defensin-like protein 160 (77 aa).

Residues 1–24 form the signal peptide; it reads MAKLSCSYFFILMLVFSALLMVEC. Cystine bridges form between cysteine 30–cysteine 77, cysteine 40–cysteine 59, cysteine 45–cysteine 71, and cysteine 49–cysteine 73.

This sequence belongs to the DEFL family.

The protein localises to the secreted. The polypeptide is Putative defensin-like protein 160 (LCR26) (Arabidopsis thaliana (Mouse-ear cress)).